The following is a 271-amino-acid chain: Rhomboid-type serine protease 2 (271 aa).

6 helical membrane passes run 16-36 (GLAV…NLVY), 64-84 (HLSF…IVMF), 89-111 (GTLY…YCLI), 115-137 (LFPN…YFAV), 152-172 (FSFP…LLAP), and 176-196 (LPGH…ENWV). Residue S125 is the Nucleophile of the active site. H179 is a catalytic residue. Positions 252–271 (HNTDTPAEPTFQGNGRVLGN) are disordered.

The protein belongs to the peptidase S54 family.

It localises to the golgi apparatus membrane. The protein resides in the golgi apparatus. The protein localises to the cis-Golgi network membrane. The catalysed reaction is Cleaves type-1 transmembrane domains using a catalytic dyad composed of serine and histidine that are contributed by different transmembrane domains.. Probable rhomboid-type serine protease that catalyzes intramembrane proteolysis. This chain is Rhomboid-type serine protease 2 (RBD2), found in Kluyveromyces lactis (strain ATCC 8585 / CBS 2359 / DSM 70799 / NBRC 1267 / NRRL Y-1140 / WM37) (Yeast).